The following is a 192-amino-acid chain: Erythropoietin (192 aa).

Positions 1–27 (MGVHECPAWLWLLLSLVSLPLGLPVPG) are cleaved as a signal peptide. Cystine bridges form between cysteine 34/cysteine 187 and cysteine 56/cysteine 60. The N-linked (GlcNAc...) asparagine glycan is linked to asparagine 51. N-linked (GlcNAc...) asparagine glycans are attached at residues asparagine 65 and asparagine 110. A glycan (O-linked (GalNAc...) serine) is linked at serine 152.

This sequence belongs to the EPO/TPO family. Produced by kidney or liver of adult mammals and by liver of fetal or neonatal mammals.

It localises to the secreted. Functionally, hormone involved in the regulation of erythrocyte proliferation and differentiation and the maintenance of a physiological level of circulating erythrocyte mass. Binds to EPOR leading to EPOR dimerization and JAK2 activation thereby activating specific downstream effectors, including STAT1 and STAT3. This is Erythropoietin (EPO) from Macaca fascicularis (Crab-eating macaque).